We begin with the raw amino-acid sequence, 182 residues long: Inosine/xanthosine triphosphatase (182 aa).

Mg(2+) is bound by residues aspartate 38 and glutamate 68. Substrate is bound at residue 68–69; the sequence is EA.

It belongs to the YjjX NTPase family. Homodimer. The cofactor is Mg(2+). It depends on Mn(2+) as a cofactor.

It catalyses the reaction XTP + H2O = XDP + phosphate + H(+). The catalysed reaction is ITP + H2O = IDP + phosphate + H(+). Functionally, phosphatase that hydrolyzes non-canonical purine nucleotides such as XTP and ITP to their respective diphosphate derivatives. Probably excludes non-canonical purines from DNA/RNA precursor pool, thus preventing their incorporation into DNA/RNA and avoiding chromosomal lesions. The sequence is that of Inosine/xanthosine triphosphatase from Erwinia tasmaniensis (strain DSM 17950 / CFBP 7177 / CIP 109463 / NCPPB 4357 / Et1/99).